Reading from the N-terminus, the 220-residue chain is Zinc-finger homeodomain protein 2 (220 aa).

Residues 1 to 11 show a composition bias toward acidic residues; the sequence is MNFEDQEEDME. Residues 1–40 form a disordered region; that stretch reads MNFEDQEEDMEMSGVNPPCGYDSLSGEGATSSGGGGVGRS. Positions 31–40 are enriched in gly residues; sequence SSGGGGVGRS. The ZF-HD dimerization-type zinc-finger motif lies at 49–98; that stretch reads YRECLKNHAVNIGGHAVDGCCEFMPSGEDGTLDALKCAACGCHRNFHRKE. Residues 100 to 160 are disordered; it reads ESIGGRAHRV…SSSGGTTKRF (61 aa). The segment at residues 157 to 220 is a DNA-binding region (homeobox; atypical); that stretch reads TKRFRTKFTA…NNKNSLGKKP (64 aa).

As to quaternary structure, homo or heterodimer. Interacts with ZHD1, ZHD3, ZHD4, ZHD5, ZHD6, ZHD7, ZHD8, ZHD9, ZHD10 and ZHD11. In terms of tissue distribution, mostly expressed in flowers and, to a lower extent, in inflorescence, stems and leaves.

It is found in the nucleus. In terms of biological role, essential protein. Putative transcription factor. In Arabidopsis thaliana (Mouse-ear cress), this protein is Zinc-finger homeodomain protein 2 (ZHD1).